The chain runs to 357 residues: 4-hydroxyphenylpyruvate dioxygenase (357 aa).

VOC domains follow at residues 12–129 and 158–313; these read GFEF…LIDR and IIDH…IFSE. Residues H161, H240, and E322 each contribute to the Fe cation site.

This sequence belongs to the 4HPPD family. Homotetramer. It depends on Fe cation as a cofactor.

The catalysed reaction is 3-(4-hydroxyphenyl)pyruvate + O2 = homogentisate + CO2. Its pathway is amino-acid degradation; L-phenylalanine degradation; acetoacetate and fumarate from L-phenylalanine: step 3/6. The chain is 4-hydroxyphenylpyruvate dioxygenase (hpd) from Pseudomonas sp. (strain P.J. 874).